Reading from the N-terminus, the 592-residue chain is Potassium-transporting ATPase potassium-binding subunit (592 aa).

13 consecutive transmembrane segments (helical) span residues 6 to 26 (WLETILFFVVLLALIKPFGTY), 67 to 87 (ACAMLLFNLVFAVSLFAMLLL), 136 to 156 (GFAVHNFTSAATGIVIAIAAI), 179 to 199 (LYILLPLSLIAAIFLVSQGVI), 283 to 303 (LSNIFEVFLILLISGGLTYTF), 312 to 332 (QGWALLAVMLAILILAIGVFY), 359 to 379 (FGLAGSALFATATTGTSCGAV), 389 to 409 (IGGMVPLSLILLSEVIFGGVG), 411 to 431 (GLYTMLAFVVIAVFVAGLMIG), 450 to 470 (ITTVLASGILVLIFSGIAMIL), 489 to 511 (LYAFASMSNNNGSAFAGLNGNTL), 519 to 539 (VAMLLGRFVPAVAVLAMAGGL), and 559 to 579 (FALWLTLVILIVGALTFFPAL).

It belongs to the KdpA family. As to quaternary structure, the system is composed of three essential subunits: KdpA, KdpB and KdpC.

Its subcellular location is the cell inner membrane. Part of the high-affinity ATP-driven potassium transport (or Kdp) system, which catalyzes the hydrolysis of ATP coupled with the electrogenic transport of potassium into the cytoplasm. This subunit binds the periplasmic potassium ions and delivers the ions to the membrane domain of KdpB through an intramembrane tunnel. This chain is Potassium-transporting ATPase potassium-binding subunit, found in Geotalea uraniireducens (strain Rf4) (Geobacter uraniireducens).